Here is a 67-residue protein sequence, read N- to C-terminus: Histone H2A (67 aa).

Glutamine 60 carries the post-translational modification N5-methylglutamine.

Belongs to the histone H2A family. As to quaternary structure, the nucleosome is a histone octamer containing two molecules each of H2A, H2B, H3 and H4 assembled in one H3-H4 heterotetramer and two H2A-H2B heterodimers. The octamer wraps approximately 147 bp of DNA.

It localises to the nucleus. Its subcellular location is the chromosome. Core component of nucleosome. Nucleosomes wrap and compact DNA into chromatin, limiting DNA accessibility to the cellular machineries which require DNA as a template. Histones thereby play a central role in transcription regulation, DNA repair, DNA replication and chromosomal stability. DNA accessibility is regulated via a complex set of post-translational modifications of histones, also called histone code, and nucleosome remodeling. This Olisthodiscus luteus (Marine phytoflagellate) protein is Histone H2A.